The following is a 23-amino-acid chain: Magainin-R1 (23 aa).

As to expression, expressed by the skin glands.

It localises to the secreted. Its function is as follows. Antimicrobial peptide. This chain is Magainin-R1, found in Xenopus ruwenzoriensis (Uganda clawed frog).